The primary structure comprises 491 residues: CTD small phosphatase-like protein 1 (491 aa).

Disordered stretches follow at residues 1–53, 140–198, 221–249, and 261–282; these read MTYA…SLDY, KLTK…TARR, KIQS…TGPP, and TVTG…DGVT. Positions 17–26 are enriched in pro residues; that stretch reads VPPPRTPVGP. The span at 37-49 shows a compositional bias: polar residues; it reads SASQPLQPKNGAN. The segment covering 141-156 has biased composition (basic and acidic residues); sequence LTKDEKNGGKMNRDGG. Residues 176–187 show a composition bias toward polar residues; sequence ASTPLNSFSANA. The span at 223 to 237 shows a compositional bias: low complexity; that stretch reads QSSQRTNSTNNNHQN. Polar residues-rich tracts occupy residues 238-249 and 264-276; these read GRPSTPTNTGPP and GLPT…QQNG. Residues 307 to 465 enclose the FCP1 homology domain; that stretch reads QDSNKKCLVI…LDILPSLEHL (159 aa). The active-site 4-aspartylphosphate intermediate is D317. D317, D319, and N428 together coordinate Mg(2+). D319 acts as the Proton donor in catalysis.

May interact (via phosphatase domain) with cpna-1. Isoform a and isoform b may interact with lim-9 (via LIM zinc-binding domain). Isoform a and isoform b may interact (via FCP1 homology domain) with unc-89 (via fibronectin type-III domain 1, Ig-like C2-type domain 48/49 and protein kinase domain 1 or Ig-like C2-type domain 50, fibronectin type-III domain 2 and protein kinase domain 2); the interaction may act as a molecular bridge to bring two unc-89 molecules together or to stabilize a loop between the 2 protein kinase domains. The cofactor is Mg(2+). Expressed in pharyngeal, vulval and body wall muscles.

It localises to the cytoplasm. The protein localises to the myofibril. Its subcellular location is the sarcomere. The protein resides in the m line. It carries out the reaction O-phospho-L-seryl-[protein] + H2O = L-seryl-[protein] + phosphate. The enzyme catalyses O-phospho-L-threonyl-[protein] + H2O = L-threonyl-[protein] + phosphate. Inhibited by beryllium trifluoride (BeF(3-)) and tetrafluoroaluminate (AlF(4-)) but not by sodium fluoride (NaF) or sodium orthovanadate (Na3VO4). Functionally, phosphatase which may play a role in the egg laying muscles. The protein is CTD small phosphatase-like protein 1 of Caenorhabditis elegans.